A 202-amino-acid polypeptide reads, in one-letter code: Recombination protein RecR (202 aa).

The segment at 61–76 adopts a C4-type zinc-finger fold; the sequence is CARCNSFTEDDICATC. In terms of domain architecture, Toprim spans 84–179; it reads SVLCVVETPA…KVTRLARGVP (96 aa).

This sequence belongs to the RecR family.

In terms of biological role, may play a role in DNA repair. It seems to be involved in an RecBC-independent recombinational process of DNA repair. It may act with RecF and RecO. This Bordetella petrii (strain ATCC BAA-461 / DSM 12804 / CCUG 43448) protein is Recombination protein RecR.